A 157-amino-acid chain; its full sequence is Peptide methionine sulfoxide reductase MsrA (157 aa).

Residue Cys-13 is part of the active site.

It belongs to the MsrA Met sulfoxide reductase family.

The enzyme catalyses L-methionyl-[protein] + [thioredoxin]-disulfide + H2O = L-methionyl-(S)-S-oxide-[protein] + [thioredoxin]-dithiol. It carries out the reaction [thioredoxin]-disulfide + L-methionine + H2O = L-methionine (S)-S-oxide + [thioredoxin]-dithiol. Has an important function as a repair enzyme for proteins that have been inactivated by oxidation. Catalyzes the reversible oxidation-reduction of methionine sulfoxide in proteins to methionine. This Methanococcus maripaludis (strain C7 / ATCC BAA-1331) protein is Peptide methionine sulfoxide reductase MsrA.